The primary structure comprises 552 residues: Protoheme IX farnesyltransferase, mitochondrial (552 aa).

Residues 118-185 (AADIPPSTST…PSGEIPPDAS (68 aa)) are disordered. Over residues 150 to 168 (EQAASASSNAPSEAAQTTP) the composition is skewed to low complexity. A run of 8 helical transmembrane segments spans residues 215–235 (LTML…VPDF), 245–267 (LSPL…ANAL), 296–316 (AAVC…QFGV), 318–338 (PTVA…YTPL), 346–366 (TWVG…AAAG), 387–407 (AGGW…FMAL), 441–461 (VFVP…SFAV), and 487–507 (ARGL…LALL).

Belongs to the UbiA prenyltransferase family.

The protein localises to the mitochondrion membrane. It catalyses the reaction heme b + (2E,6E)-farnesyl diphosphate + H2O = Fe(II)-heme o + diphosphate. In terms of biological role, converts protoheme IX and farnesyl diphosphate to heme O. In Pyricularia oryzae (strain 70-15 / ATCC MYA-4617 / FGSC 8958) (Rice blast fungus), this protein is Protoheme IX farnesyltransferase, mitochondrial (COX10).